Consider the following 154-residue polypeptide: UPF0127 protein TSIB_1463 (154 aa).

It belongs to the UPF0127 family.

The sequence is that of UPF0127 protein TSIB_1463 from Thermococcus sibiricus (strain DSM 12597 / MM 739).